The sequence spans 231 residues: Platelet-activating factor acetylhydrolase IB subunit alpha1 (231 aa).

N-acetylserine is present on serine 2. Serine 2 bears the Phosphoserine mark. Active-site residues include serine 47, aspartate 192, and histidine 195.

This sequence belongs to the 'GDSL' lipolytic enzyme family. Platelet-activating factor acetylhydrolase IB beta/gamma subunits subfamily. As to quaternary structure, forms a catalytic dimer which is either homodimer (alpha1/alpha1 homodimer) or heterodimer with PAFAH1B2 (alpha1/alpha2 heterodimer). Component of the cytosolic (PAF-AH (I)) heterotetrameric enzyme, which is composed of PAFAH1B1 (beta), PAFAH1B2 (alpha2) and PAFAH1B3 (alpha1) subunits. The catalytic activity of the enzyme resides in the alpha1 (PAFAH1B3) and alpha2 (PAFAH1B2) subunits, whereas the beta subunit (PAFAH1B1) has regulatory activity. Trimer formation is not essential for the catalytic activity. Interacts with VLDLR; this interaction may modulate the Reelin pathway. In the adult, expressed in brain, skeletal muscle, kidney, thymus, spleen, colon, testis, ovary and peripheral blood leukocytes. In the fetus, highest expression occurs in brain.

It is found in the cytoplasm. The enzyme catalyses a 1-O-alkyl-2-acetyl-sn-glycero-3-phosphocholine + H2O = a 1-O-alkyl-sn-glycero-3-phosphocholine + acetate + H(+). The catalysed reaction is 1-O-hexadecyl-2-acetyl-sn-glycero-3-phosphocholine + H2O = 1-O-hexadecyl-sn-glycero-3-phosphocholine + acetate + H(+). It carries out the reaction 1-O-hexadecyl-2-acetyl-sn-glycero-3-phosphate + H2O = 1-O-hexadecyl-sn-glycero-3-phosphate + acetate + H(+). Its activity is regulated as follows. Beta subunit (PAFAH1B1) inhibits the acetylhydrolase activity of the alpha1/alpha1 catalytic homodimer. In terms of biological role, alpha1 catalytic subunit of the cytosolic type I platelet-activating factor (PAF) acetylhydrolase (PAF-AH (I)) heterotetrameric enzyme that catalyzes the hydrolyze of the acetyl group at the sn-2 position of PAF and its analogs and modulates the action of PAF. The activity and substrate specificity of PAF-AH (I) are affected by its subunit composition. Both alpha1/alpha1 homodimer (PAFAH1B3/PAFAH1B3 homodimer) and alpha1/alpha2 heterodimer(PAFAH1B3/PAFAH1B2 heterodimer) hydrolyze 1-O-alkyl-2-acetyl-sn-glycero-3-phosphoric acid (AAGPA) more efficiently than PAF, but they have little hydrolytic activity towards 1-O-alkyl-2-acetyl-sn-glycero-3-phosphorylethanolamine (AAGPE). Plays an important role during the development of brain. The polypeptide is Platelet-activating factor acetylhydrolase IB subunit alpha1 (Homo sapiens (Human)).